A 335-amino-acid polypeptide reads, in one-letter code: Tryptophan--tRNA ligase (335 aa).

ATP-binding positions include 19–21 and 28–29; these read QPS and GN. The 'HIGH' region motif lies at 20 to 29; that stretch reads PSSGMLHLGN. Asp143 contacts L-tryptophan. ATP contacts are provided by residues 155–157, Ile192, and 201–205; these read GAD and KMSKS. Residues 201–205 carry the 'KMSKS' region motif; it reads KMSKS.

Belongs to the class-I aminoacyl-tRNA synthetase family. Homodimer.

The protein resides in the cytoplasm. The enzyme catalyses tRNA(Trp) + L-tryptophan + ATP = L-tryptophyl-tRNA(Trp) + AMP + diphosphate + H(+). Functionally, catalyzes the attachment of tryptophan to tRNA(Trp). In Tropheryma whipplei (strain Twist) (Whipple's bacillus), this protein is Tryptophan--tRNA ligase.